A 109-amino-acid polypeptide reads, in one-letter code: Mannose-specific lectin (109 aa).

The Bulb-type lectin domain maps to 1–109 (DNILYSSEVL…PPIWATGTGR (109 aa)). Residues Cys29 and Cys52 are joined by a disulfide bond. Residues 79 to 82 (TGTN) constitute a propeptide that is removed on maturation.

Homotrimer or homotetramer.

The protein resides in the secreted. Mannose-specific lectin. Shows agglutinating activity toward rabbit erythrocytes and mitogenic activity towards mouse lymphocytes. The polypeptide is Mannose-specific lectin (Aloe arborescens (Kidachi aloe)).